Reading from the N-terminus, the 420-residue chain is L-cysteine:1D-myo-inositol 2-amino-2-deoxy-alpha-D-glucopyranoside ligase (420 aa).

Cys46 is a Zn(2+) binding site. L-cysteinyl-5'-AMP is bound by residues 46–49, Thr61, and 84–86; these read CGIT and NVT. Residues 48–58 carry the 'HIGH' region motif; that stretch reads ITPYDSTHLGH. The 'ERGGDP' region signature appears at 194–199; sequence ERGGDP. An L-cysteinyl-5'-AMP-binding site is contributed by Trp235. Position 239 (Cys239) interacts with Zn(2+). 257-259 contacts L-cysteinyl-5'-AMP; it reads GTD. His264 provides a ligand contact to Zn(2+). Val291 is an L-cysteinyl-5'-AMP binding site. The 'KMSKS' region signature appears at 297–301; that stretch reads KMSKS.

Belongs to the class-I aminoacyl-tRNA synthetase family. MshC subfamily. In terms of assembly, monomer. Zn(2+) is required as a cofactor.

It catalyses the reaction 1D-myo-inositol 2-amino-2-deoxy-alpha-D-glucopyranoside + L-cysteine + ATP = 1D-myo-inositol 2-(L-cysteinylamino)-2-deoxy-alpha-D-glucopyranoside + AMP + diphosphate + H(+). Its function is as follows. Catalyzes the ATP-dependent condensation of GlcN-Ins and L-cysteine to form L-Cys-GlcN-Ins. This Beutenbergia cavernae (strain ATCC BAA-8 / DSM 12333 / CCUG 43141 / JCM 11478 / NBRC 16432 / NCIMB 13614 / HKI 0122) protein is L-cysteine:1D-myo-inositol 2-amino-2-deoxy-alpha-D-glucopyranoside ligase.